A 225-amino-acid chain; its full sequence is Shikimate kinase (225 aa).

27-32 (GAGKTT) provides a ligand contact to ATP. Thr31 serves as a coordination point for Mg(2+). Substrate is bound by residues Asp49, Arg73, and Gly95. ATP is bound at residue Arg132. Arg150 serves as a coordination point for substrate. The interval 186-225 (GGSEPDEAADAAGGSEPDEAADAAGGSEPDEAADAAGGKR) is disordered.

This sequence belongs to the shikimate kinase family. In terms of assembly, monomer. Mg(2+) serves as cofactor.

It localises to the cytoplasm. It carries out the reaction shikimate + ATP = 3-phosphoshikimate + ADP + H(+). It participates in metabolic intermediate biosynthesis; chorismate biosynthesis; chorismate from D-erythrose 4-phosphate and phosphoenolpyruvate: step 5/7. Catalyzes the specific phosphorylation of the 3-hydroxyl group of shikimic acid using ATP as a cosubstrate. The sequence is that of Shikimate kinase from Frankia casuarinae (strain DSM 45818 / CECT 9043 / HFP020203 / CcI3).